A 265-amino-acid polypeptide reads, in one-letter code: MAAKMAFADKPNHFINFPLAQFSGFMGKYLKLQSQLVEMGLDCKLQKAPHVSITMLDIKADQYKQVEFAIQEILDDLAAYEGYIVFDKPHMLGRCLVLDVKGFEELHVDIVEILRKMGCTADQSREWIPHCTVAQFEEEKEINAMQFYYKLPFYLKHNNILTDSRLELVKIGSSKIDGFYCSELSVWCGERLCYKPPTPKFSDIFGYCCIEKIRGDLEIGDLPQDDEEAWAELSYHYQRNTYFFRYVHDNSIYFRIVCRMKGCMC.

Belongs to the coronaviruses ns2a protein family.

This Rattus norvegicus (Rat) protein is Non-structural protein 2a.